The primary structure comprises 360 residues: DNA replication and repair protein RecF (360 aa).

30-37 (GQNGSGKT) contributes to the ATP binding site.

This sequence belongs to the RecF family.

The protein resides in the cytoplasm. Its function is as follows. The RecF protein is involved in DNA metabolism; it is required for DNA replication and normal SOS inducibility. RecF binds preferentially to single-stranded, linear DNA. It also seems to bind ATP. The chain is DNA replication and repair protein RecF from Shewanella frigidimarina (strain NCIMB 400).